Here is a 516-residue protein sequence, read N- to C-terminus: Flagellar radial spoke protein 3 (516 aa).

2 stretches are compositionally biased toward polar residues: residues 1 to 11 and 62 to 74; these read MVQAKAQQQLY and ATQT…SPAS. Disordered regions lie at residues 1–32, 60–90, 388–412, and 424–447; these read MVQA…EDET, ADAT…TPEA, NAKW…AAEE, and AAAE…DGVE. Residues 391 to 412 are compositionally biased toward basic and acidic residues; it reads WEADKAEAAEKARAEAEAAAEE.

Belongs to the flagellar radial spoke RSP3 family. In terms of assembly, interacts with FAP91. In terms of processing, protein 3 is one of the 5 radial spoke proteins that are phosphorylated. Post-translationally, protein 3a might only differ from protein 3 in being unphosphorylated.

It localises to the cytoplasm. The protein localises to the cytoskeleton. Its subcellular location is the flagellum axoneme. In terms of biological role, protein 3 may attach the radial spoke to the outer doublet microtubule or is required to form a stable spoke structure. Flagellar radial spokes contribute to the regulation of dynein arm activity and thus the pattern of flagellar bending. They consist of a thin stalk, which is attached to the a subfiber of the outer doublet microtubule, and a bulbous head, which is attached to the stalk and appears to interact with the projections from the central pair of microtubules. The protein is Flagellar radial spoke protein 3 of Chlamydomonas reinhardtii (Chlamydomonas smithii).